A 205-amino-acid polypeptide reads, in one-letter code: Recombination protein RecR (205 aa).

Residues 64-79 form a C4-type zinc finger; that stretch reads CSRCYFITQGDLCAIC. Residues 87–182 enclose the Toprim domain; that stretch reads RVICVVEEPL…RVTRLARGLP (96 aa).

The protein belongs to the RecR family.

Its function is as follows. May play a role in DNA repair. It seems to be involved in an RecBC-independent recombinational process of DNA repair. It may act with RecF and RecO. The sequence is that of Recombination protein RecR from Roseiflexus sp. (strain RS-1).